The following is a 369-amino-acid chain: Cyclin-dependent kinase 5 activator 2 (369 aa).

Over residues 1–11 the composition is skewed to polar residues; the sequence is MGTVLSLSPAS. 3 disordered regions span residues 1 to 55, 72 to 176, and 330 to 369; these read MGTV…SRLK, ASAK…SPRR, and EAAA…NLDR. The N-myristoyl glycine moiety is linked to residue G2. The segment covering 74 to 84 has biased composition (basic residues); sequence AKKKKGSKKVT. T84 carries the post-translational modification Phosphothreonine. The span at 99 to 112 shows a compositional bias: basic and acidic residues; that stretch reads RNRENLLRKGRDGP. Residues 122 to 144 are compositionally biased toward low complexity; the sequence is AVPVPTVPTTAATCEPPSGGSAA. The segment covering 145–171 has biased composition (pro residues); that stretch reads APPPGSGGGKPPPPPPPAPQAAPPAPG. The segment covering 331–352 has biased composition (low complexity); sequence AAASTGGPPSGSSASTTSSSSA.

This sequence belongs to the cyclin-dependent kinase 5 activator family. As to quaternary structure, heterodimer of a catalytic subunit and a regulatory subunit. In terms of processing, myristoylated. The Gly-2-Ala mutant is absent of the cell periphery, suggesting that a proper myristoylation signal is essential for the proper distribution of CDK5R2 (p39).

It is found in the cell membrane. Activator of CDK5/TPKII. In Mus musculus (Mouse), this protein is Cyclin-dependent kinase 5 activator 2 (Cdk5r2).